We begin with the raw amino-acid sequence, 647 residues long: Threonine--tRNA ligase (647 aa).

The TGS domain occupies methionine 1–threonine 61. Residues aspartate 240–proline 538 are catalytic. Zn(2+) contacts are provided by cysteine 334, histidine 385, and histidine 515.

Belongs to the class-II aminoacyl-tRNA synthetase family. In terms of assembly, homodimer. The cofactor is Zn(2+).

The protein localises to the cytoplasm. The enzyme catalyses tRNA(Thr) + L-threonine + ATP = L-threonyl-tRNA(Thr) + AMP + diphosphate + H(+). In terms of biological role, catalyzes the attachment of threonine to tRNA(Thr) in a two-step reaction: L-threonine is first activated by ATP to form Thr-AMP and then transferred to the acceptor end of tRNA(Thr). Also edits incorrectly charged L-seryl-tRNA(Thr). The sequence is that of Threonine--tRNA ligase from Streptococcus pyogenes serotype M18 (strain MGAS8232).